A 173-amino-acid chain; its full sequence is Bifunctional protein PyrR (173 aa).

The PRPP-binding motif lies at 93-105; that stretch reads VILIDDVLYTGRT.

The protein belongs to the purine/pyrimidine phosphoribosyltransferase family. PyrR subfamily. In terms of assembly, homodimer and homohexamer; in equilibrium.

It carries out the reaction UMP + diphosphate = 5-phospho-alpha-D-ribose 1-diphosphate + uracil. In terms of biological role, regulates transcriptional attenuation of the pyrimidine nucleotide (pyr) operon by binding in a uridine-dependent manner to specific sites on pyr mRNA. This disrupts an antiterminator hairpin in the RNA and favors formation of a downstream transcription terminator, leading to a reduced expression of downstream genes. Functionally, also displays a weak uracil phosphoribosyltransferase activity which is not physiologically significant. The sequence is that of Bifunctional protein PyrR from Streptococcus pyogenes serotype M49 (strain NZ131).